A 103-amino-acid chain; its full sequence is MANQRIRIRLKSFDHRLIDQSAQEIVDTAKRTGAQVCGPVPLPTRIERFNVLTSPHVNKDARDQYEIRTHKRMVDIVQPTDKTVDALMKLDLAAGVDVQIALG.

The protein belongs to the universal ribosomal protein uS10 family. As to quaternary structure, part of the 30S ribosomal subunit.

Its function is as follows. Involved in the binding of tRNA to the ribosomes. The polypeptide is Small ribosomal subunit protein uS10 (Psychrobacter arcticus (strain DSM 17307 / VKM B-2377 / 273-4)).